Consider the following 321-residue polypeptide: MRIVALAGGIGGARFLRGLLAAVGPQDEITVIGNTGDDIHLYGLKVCPDLDTVMYTLGGGIHEEQGWGRADETWSIKAEMKEYGVGPEWFGLGDRDFATHLVRSQMLTAGYSLSQVTEALCVRWNPGVRLLPMSDDRVETHVRITDEQGTRAVHFQEYWVRLHAAVDAEAIIPVGADTAKPAPGVLEAIAEADVILFPPSNPVVSIGTILAVPGIREAVAAAPAPVVGLSPIIGGAPVRGMADKVLAAVGVEATAEAVALNYGPDLIDGWLVDTADEHAVAAVEAAGIACRAVPLLMTDVEATAEMARTALALAEQVRHGS.

Asp-51 contributes to the 7,8-didemethyl-8-hydroxy-5-deazariboflavin binding site.

It belongs to the CofD family. In terms of assembly, homodimer. Mg(2+) serves as cofactor.

It catalyses the reaction enolpyruvoyl-2-diphospho-5'-guanosine + 7,8-didemethyl-8-hydroxy-5-deazariboflavin = dehydro coenzyme F420-0 + GMP + H(+). It functions in the pathway cofactor biosynthesis; coenzyme F420 biosynthesis. Functionally, catalyzes the transfer of the phosphoenolpyruvate moiety from enoylpyruvoyl-2-diphospho-5'-guanosine (EPPG) to 7,8-didemethyl-8-hydroxy-5-deazariboflavin (FO) with the formation of dehydro coenzyme F420-0 and GMP. The chain is Phosphoenolpyruvate transferase from Kitasatospora aureofaciens (Streptomyces aureofaciens).